A 189-amino-acid chain; its full sequence is Apolipoprotein D (189 aa).

A signal peptide spans 1–20; it reads MATMLLLLATLAGLFTTTEG. Q21 carries the pyrrolidone carboxylic acid modification. 2 disulfide bridges follow: C28–C134 and C61–C185. 2 N-linked (GlcNAc...) asparagine glycosylation sites follow: N65 and N98.

It belongs to the calycin superfamily. Lipocalin family. As to quaternary structure, homodimer. In terms of tissue distribution, expressed in liver, kidney, bladder, adrenal, cerebrum, duodenum, testis, lung, spleen, pancreas, heart and skin.

It localises to the secreted. In terms of biological role, APOD occurs in the macromolecular complex with lecithin-transport and binding of bilin. Appears to be able to transport a variety of ligands in a number of different contexts. In Rattus norvegicus (Rat), this protein is Apolipoprotein D (Apod).